Consider the following 353-residue polypeptide: WAT1-related protein At3g28100 (353 aa).

10 consecutive transmembrane segments (helical) span residues 12–32, 43–63, 81–101, 105–125, 137–157, 187–207, 219–239, 252–272, 283–303, and 308–328; these read AVFL…STLF, YAFL…SLFF, IGLL…GIEY, TLAS…AIIF, SVAK…VVLY, WLIG…SFIL, FTVS…IGLV, FDIT…YYVI, LYLA…SAVF, and LYLG…AVMW. The 129-residue stretch at 27-155 folds into the EamA domain; that stretch reads GISTLFKVAT…LSLIGALVVV (129 aa).

It belongs to the drug/metabolite transporter (DMT) superfamily. Plant drug/metabolite exporter (P-DME) (TC 2.A.7.4) family.

It localises to the membrane. The chain is WAT1-related protein At3g28100 from Arabidopsis thaliana (Mouse-ear cress).